A 274-amino-acid chain; its full sequence is ATP synthase subunit a (274 aa).

The next 5 helical transmembrane spans lie at 43–63 (TLNI…LYVF), 103–123 (VIAP…VMDL), 144–164 (VVPT…FVLI), 223–243 (LIFI…LSLP), and 245–265 (AIFH…LTIV).

It belongs to the ATPase A chain family. As to quaternary structure, F-type ATPases have 2 components, CF(1) - the catalytic core - and CF(0) - the membrane proton channel. CF(1) has five subunits: alpha(3), beta(3), gamma(1), delta(1), epsilon(1). CF(0) has three main subunits: a(1), b(2) and c(9-12). The alpha and beta chains form an alternating ring which encloses part of the gamma chain. CF(1) is attached to CF(0) by a central stalk formed by the gamma and epsilon chains, while a peripheral stalk is formed by the delta and b chains.

Its subcellular location is the cell inner membrane. Its function is as follows. Key component of the proton channel; it plays a direct role in the translocation of protons across the membrane. This chain is ATP synthase subunit a, found in Photorhabdus laumondii subsp. laumondii (strain DSM 15139 / CIP 105565 / TT01) (Photorhabdus luminescens subsp. laumondii).